The following is a 483-amino-acid chain: ATP-dependent RNA helicase dbp-5 (483 aa).

The tract at residues 1 to 47 (MADLASRITKPDEAPAAAPEAAPVSAPASEEPKAPENETSIEESQSN) is disordered. The span at 14–29 (APAAAPEAAPVSAPAS) shows a compositional bias: low complexity. Positions 74–102 (SSFDELGLPEAVNRGLLAINFKKPSKVQE) match the Q motif motif. The region spanning 107–276 (LMLSDPPRNM…ERFAPNANQM (170 aa)) is the Helicase ATP-binding domain. 120 to 127 (SQSGTGKT) contacts ATP. The DEAD box signature appears at 223–226 (DEAD). The Helicase C-terminal domain occupies 304–455 (ILCKLYGLMT…LIQLNPNDLD (152 aa)).

The protein belongs to the DEAD box helicase family. DDX19/DBP5 subfamily. Associates with the nuclear pore complex.

The protein localises to the cytoplasm. Its subcellular location is the nucleus. It localises to the nuclear pore complex. It is found in the nucleus membrane. It carries out the reaction ATP + H2O = ADP + phosphate + H(+). Functionally, ATP-dependent RNA helicase associated with the nuclear pore complex and essential for mRNA export from the nucleus. May participate in a terminal step of mRNA export through the removal of proteins that accompany mRNA through the nucleopore complex. May also be involved in early transcription. The sequence is that of ATP-dependent RNA helicase dbp-5 (dbp-5) from Neurospora crassa (strain ATCC 24698 / 74-OR23-1A / CBS 708.71 / DSM 1257 / FGSC 987).